Reading from the N-terminus, the 156-residue chain is Ribosomal RNA large subunit methyltransferase H (156 aa).

S-adenosyl-L-methionine-binding positions include L73, G104, and 123-128 (ISSMTL).

This sequence belongs to the RNA methyltransferase RlmH family. Homodimer.

Its subcellular location is the cytoplasm. The catalysed reaction is pseudouridine(1915) in 23S rRNA + S-adenosyl-L-methionine = N(3)-methylpseudouridine(1915) in 23S rRNA + S-adenosyl-L-homocysteine + H(+). Its function is as follows. Specifically methylates the pseudouridine at position 1915 (m3Psi1915) in 23S rRNA. This chain is Ribosomal RNA large subunit methyltransferase H, found in Burkholderia ambifaria (strain MC40-6).